Here is a 687-residue protein sequence, read N- to C-terminus: Cytochrome b/c1 (687 aa).

The chain crosses the membrane as a helical span at residues 46–66 (FGAILSFMLGMQILTGVILAM). 2 residues coordinate heme b: histidine 96 and histidine 110. 2 helical membrane passes run 126–146 (VLWI…FMGY) and 160–180 (VITN…TLLW). Histidine 197 and histidine 211 together coordinate heme b. 6 helical membrane-spanning segments follow: residues 199–219 (LLPF…HVAG), 247–267 (FGVA…PNYL), 305–325 (LAGV…PWLD), 337–357 (LAKQ…YLGA), 363–383 (IYVI…LIVL), and 410–430 (AVAS…GSLQ). Residues 404 to 434 (LAKGGKAVASVAIALVAAGALFLGSLQDARA) are internal signal sequence. Residues 458 to 643 (GALQRGLKVY…TVAQYSKDVT (186 aa)) enclose the Cytochrome c domain. Residues cysteine 471, cysteine 474, histidine 475, and methionine 616 each contribute to the heme c site. A helical transmembrane segment spans residues 666–678 (VFLIIFAGLMYFT).

This sequence belongs to the cytochrome b family. The main subunits of complex b-c1 are: cytochrome b, cytochrome c1 and the Rieske protein. Heme b is required as a cofactor. Requires heme c as cofactor. Post-translationally, the protein is post-translationally processed into cytochrome b and c1. This occurs by processing between residues 434 and 435 without processing between cytochrome b and the N-terminal of the putative signal sequence domain.

It localises to the cell inner membrane. In terms of biological role, component of the ubiquinol-cytochrome c reductase complex (complex III or cytochrome b-c1 complex), which is a respiratory chain that generates an electrochemical potential coupled to ATP synthesis. c1 functions as an electron donor to cytochrome c. This Bradyrhizobium diazoefficiens (strain JCM 10833 / BCRC 13528 / IAM 13628 / NBRC 14792 / USDA 110) protein is Cytochrome b/c1 (fbcH).